We begin with the raw amino-acid sequence, 415 residues long: Squalene synthase 11 (415 aa).

2 helical membrane-spanning segments follow: residues 281–301 (AIFR…ALCF) and 392–412 (LIII…SNLP).

It belongs to the phytoene/squalene synthase family. It depends on Mg(2+) as a cofactor. Mn(2+) serves as cofactor.

It is found in the endoplasmic reticulum membrane. It catalyses the reaction 2 (2E,6E)-farnesyl diphosphate + NADH + H(+) = squalene + 2 diphosphate + NAD(+). The catalysed reaction is 2 (2E,6E)-farnesyl diphosphate + NADPH + H(+) = squalene + 2 diphosphate + NADP(+). It functions in the pathway terpene metabolism; lanosterol biosynthesis; lanosterol from farnesyl diphosphate: step 1/3. Its function is as follows. Component of the triterpene saponins (e.g. ginsenosides or panaxosides) and phytosterols biosynthetic pathways. Catalyzes the biosynthesis of squalene. This is Squalene synthase 11 from Panax ginseng (Korean ginseng).